We begin with the raw amino-acid sequence, 331 residues long: GTP 3',8-cyclase (331 aa).

Positions 6-234 constitute a Radical SAM core domain; the sequence is PFNRKIDYLR…PATGKSHDGP (229 aa). Arg15 serves as a coordination point for GTP. [4Fe-4S] cluster contacts are provided by Cys22 and Cys26. Tyr28 provides a ligand contact to S-adenosyl-L-methionine. Cys29 is a [4Fe-4S] cluster binding site. Arg66 lines the GTP pocket. Gly70 is an S-adenosyl-L-methionine binding site. Ser97 contacts GTP. Ser121 is an S-adenosyl-L-methionine binding site. Residue Lys158 participates in GTP binding. Residue Met192 participates in S-adenosyl-L-methionine binding. [4Fe-4S] cluster contacts are provided by Cys258 and Cys261. 263 to 265 is a binding site for GTP; sequence RVR. Cys275 provides a ligand contact to [4Fe-4S] cluster.

This sequence belongs to the radical SAM superfamily. MoaA family. Monomer and homodimer. Requires [4Fe-4S] cluster as cofactor.

The catalysed reaction is GTP + AH2 + S-adenosyl-L-methionine = (8S)-3',8-cyclo-7,8-dihydroguanosine 5'-triphosphate + 5'-deoxyadenosine + L-methionine + A + H(+). It functions in the pathway cofactor biosynthesis; molybdopterin biosynthesis. Its function is as follows. Catalyzes the cyclization of GTP to (8S)-3',8-cyclo-7,8-dihydroguanosine 5'-triphosphate. The protein is GTP 3',8-cyclase of Hydrogenovibrio crunogenus (strain DSM 25203 / XCL-2) (Thiomicrospira crunogena).